A 159-amino-acid polypeptide reads, in one-letter code: SsrA-binding protein (159 aa).

The protein belongs to the SmpB family.

The protein resides in the cytoplasm. In terms of biological role, required for rescue of stalled ribosomes mediated by trans-translation. Binds to transfer-messenger RNA (tmRNA), required for stable association of tmRNA with ribosomes. tmRNA and SmpB together mimic tRNA shape, replacing the anticodon stem-loop with SmpB. tmRNA is encoded by the ssrA gene; the 2 termini fold to resemble tRNA(Ala) and it encodes a 'tag peptide', a short internal open reading frame. During trans-translation Ala-aminoacylated tmRNA acts like a tRNA, entering the A-site of stalled ribosomes, displacing the stalled mRNA. The ribosome then switches to translate the ORF on the tmRNA; the nascent peptide is terminated with the 'tag peptide' encoded by the tmRNA and targeted for degradation. The ribosome is freed to recommence translation, which seems to be the essential function of trans-translation. The polypeptide is SsrA-binding protein (Coxiella burnetii (strain RSA 331 / Henzerling II)).